The sequence spans 390 residues: Zinc transporter 8 (390 aa).

The N-terminal stretch at 1 to 25 (MRTNTTATVLLAAAVALLLATAARG) is a signal peptide. The N-linked (GlcNAc...) asparagine glycan is linked to Asn-4. Topologically, residues 26–50 (DGGDGGCGKEDAAAGRDRARARGLK) are extracellular. A helical membrane pass occupies residues 51 to 71 (IAAFFSILVCGALGCGLPSLG). The Cytoplasmic segment spans residues 72 to 82 (RHVPALRPDGD). The chain crosses the membrane as a helical span at residues 83–103 (VFFLVKAFAAGVILATGFIHI). Residues 104 to 124 (LPDAFDNLTDDCLPAGGPWKE) are Extracellular-facing. A glycan (N-linked (GlcNAc...) asparagine) is linked at Asn-110. The helical transmembrane segment at 125–145 (FPFAGFGAMVGAIGTLVVDTL) threads the bilayer. Residues 146–235 (ATGYFTRALS…DDKETTLRHR (90 aa)) lie on the Cytoplasmic side of the membrane. The tract at residues 165-199 (VADEEKQSAAATQQHNHHHNHHVVGDGGGGGEEHE) is disordered. Residues 236 to 256 (VISQVLELGIVVHSVIIGISL) traverse the membrane as a helical segment. Residues 257–267 (GASQNPETIKP) are Extracellular-facing. A helical transmembrane segment spans residues 268–288 (LVVALSFHQMFEGMGLGGCIV). Residues 289–296 (QAKFKVRS) are Cytoplasmic-facing. Residues 297-317 (IVTMVLFFCLTTPVGIAVGVG) form a helical membrane-spanning segment. Residues 318-329 (ISSVYNESSPTA) are Extracellular-facing. Asn-323 carries an N-linked (GlcNAc...) asparagine glycan. A helical transmembrane segment spans residues 330–350 (LVVEGILNSVAAGILIYMALV). Residues 351–369 (DLLAEDFMNPRVQSKGKLQ) are Cytoplasmic-facing. A helical membrane pass occupies residues 370-390 (LGINLAMLAGAGLMSMLAKWA).

This sequence belongs to the ZIP transporter (TC 2.A.5) family.

It localises to the cell membrane. Zinc transporter that may mediate zinc uptake from the rhizosphere and may be responsible for the translocation of zinc within the plant. The chain is Zinc transporter 8 (ZIP8) from Oryza sativa subsp. japonica (Rice).